The chain runs to 148 residues: Arginine repressor (148 aa).

Belongs to the ArgR family.

The protein resides in the cytoplasm. It functions in the pathway amino-acid biosynthesis; L-arginine biosynthesis [regulation]. Its function is as follows. Regulates arginine biosynthesis genes. The protein is Arginine repressor of Chlorobium phaeovibrioides (strain DSM 265 / 1930) (Prosthecochloris vibrioformis (strain DSM 265)).